Consider the following 182-residue polypeptide: Core-binding factor subunit beta (182 aa).

Alanine 173 bears the Phosphoserine mark.

This sequence belongs to the CBF-beta family. Heterodimer with RUNX1, RUNX2 and RUNX3. Interacts with COPRS. Found in a complex with PRMT5 and RUNX1. As to quaternary structure, (Microbial infection) Interacts with HIV-1 Vif; forming an active cullin-5-RING E3 ubiquitin-protein ligase complex (ECS complex).

The protein localises to the nucleus. In terms of biological role, forms the heterodimeric complex core-binding factor (CBF) with RUNX family proteins (RUNX1, RUNX2, and RUNX3). RUNX members modulate the transcription of their target genes through recognizing the core consensus binding sequence 5'-TGTGGT-3', or very rarely, 5'-TGCGGT-3', within their regulatory regions via their runt domain, while CBFB is a non-DNA-binding regulatory subunit that allosterically enhances the sequence-specific DNA-binding capacity of RUNX. The heterodimers bind to the core site of a number of enhancers and promoters, including murine leukemia virus, polyomavirus enhancer, T-cell receptor enhancers, LCK, IL3 and GM-CSF promoters. CBF complexes repress ZBTB7B transcription factor during cytotoxic (CD8+) T cell development. They bind to RUNX-binding sequence within the ZBTB7B locus acting as transcriptional silencer and allowing for cytotoxic T cell differentiation. Functionally, (Microbial infection) Following infection, hijacked by the HIV-1 Vif protein, leading to the formation a cullin-5-RING E3 ubiquitin-protein ligase complex (ECS complex) that catalyzes ubiquitination and degradation of APOBEC3F and APOBEC3G. The complex can also ubiquitinate APOBEC3H to some extent. Association with HIV-1 Vif protein also inhibits the transcription coactivator activity of CBFB/CBF-beta. The sequence is that of Core-binding factor subunit beta (CBFB) from Homo sapiens (Human).